The following is a 571-amino-acid chain: Urease subunit alpha (571 aa).

In terms of domain architecture, Urease spans 132-571; sequence GGIDAHIHFI…VALAQRYFLF (440 aa). Residues His137, His139, and Lys220 each contribute to the Ni(2+) site. Residue Lys220 is modified to N6-carboxylysine. His222 contacts substrate. Residues His249 and His275 each contribute to the Ni(2+) site. The active-site Proton donor is His323. Asp363 lines the Ni(2+) pocket.

The protein belongs to the metallo-dependent hydrolases superfamily. Urease alpha subunit family. As to quaternary structure, heterotrimer of UreA (gamma), UreB (beta) and UreC (alpha) subunits. Three heterotrimers associate to form the active enzyme. Ni cation serves as cofactor. In terms of processing, carboxylation allows a single lysine to coordinate two nickel ions.

It localises to the cytoplasm. It catalyses the reaction urea + 2 H2O + H(+) = hydrogencarbonate + 2 NH4(+). It participates in nitrogen metabolism; urea degradation; CO(2) and NH(3) from urea (urease route): step 1/1. The polypeptide is Urease subunit alpha (Halalkalibacterium halodurans (strain ATCC BAA-125 / DSM 18197 / FERM 7344 / JCM 9153 / C-125) (Bacillus halodurans)).